The chain runs to 67 residues: MMSKLGVLLTICLLLFPLTAVPLDGDQPADQPAERKQNEQHPLFDQKRGCCRWPCPSRCGMARCCSS.

Positions 1-20 (MMSKLGVLLTICLLLFPLTA) are cleaved as a signal peptide. Residues 21–48 (VPLDGDQPADQPAERKQNEQHPLFDQKR) constitute a propeptide that is removed on maturation. 3 disulfide bridges follow: Cys-50-Cys-59, Cys-51-Cys-64, and Cys-55-Cys-65.

It belongs to the conotoxin M superfamily. As to expression, expressed by the venom duct.

The protein localises to the secreted. In terms of biological role, mu-conotoxins block voltage-gated sodium channels (Nav). This toxin specifically inhibits mammalian Nav1.8/SCN10A sodium currents (IC(50)=2.11 uM) without inducing a shift in the current-voltage relationship of this channel. In vivo, shows potent analgesic activity in a mice hotplate analgesic assay. In addition, this toxin has better analgesic effects than Ziconotide, an analgesic drug. The protein is Mu-conotoxin TsIIIA of Conus tessulatus (Tessellate cone).